We begin with the raw amino-acid sequence, 282 residues long: Phosphatidylserine decarboxylase proenzyme (282 aa).

Active-site charge relay system; for autoendoproteolytic cleavage activity residues include aspartate 88, histidine 144, and serine 247. Residue serine 247 is the Schiff-base intermediate with substrate; via pyruvic acid; for decarboxylase activity of the active site. Pyruvic acid (Ser); by autocatalysis is present on serine 247.

It belongs to the phosphatidylserine decarboxylase family. PSD-B subfamily. Prokaryotic type I sub-subfamily. Heterodimer of a large membrane-associated beta subunit and a small pyruvoyl-containing alpha subunit. The cofactor is pyruvate. Post-translationally, is synthesized initially as an inactive proenzyme. Formation of the active enzyme involves a self-maturation process in which the active site pyruvoyl group is generated from an internal serine residue via an autocatalytic post-translational modification. Two non-identical subunits are generated from the proenzyme in this reaction, and the pyruvate is formed at the N-terminus of the alpha chain, which is derived from the carboxyl end of the proenzyme. The autoendoproteolytic cleavage occurs by a canonical serine protease mechanism, in which the side chain hydroxyl group of the serine supplies its oxygen atom to form the C-terminus of the beta chain, while the remainder of the serine residue undergoes an oxidative deamination to produce ammonia and the pyruvoyl prosthetic group on the alpha chain. During this reaction, the Ser that is part of the protease active site of the proenzyme becomes the pyruvoyl prosthetic group, which constitutes an essential element of the active site of the mature decarboxylase.

It localises to the cell membrane. The catalysed reaction is a 1,2-diacyl-sn-glycero-3-phospho-L-serine + H(+) = a 1,2-diacyl-sn-glycero-3-phosphoethanolamine + CO2. It participates in phospholipid metabolism; phosphatidylethanolamine biosynthesis; phosphatidylethanolamine from CDP-diacylglycerol: step 2/2. Functionally, catalyzes the formation of phosphatidylethanolamine (PtdEtn) from phosphatidylserine (PtdSer). The polypeptide is Phosphatidylserine decarboxylase proenzyme (Xanthomonas campestris pv. campestris (strain 8004)).